The primary structure comprises 220 residues: 7-cyano-7-deazaguanine synthase (220 aa).

10–20 (FSGGQDSTTCL) is an ATP binding site. Cys186, Cys195, Cys198, and Cys201 together coordinate Zn(2+).

Belongs to the QueC family. In terms of assembly, homodimer. Zn(2+) is required as a cofactor.

It catalyses the reaction 7-carboxy-7-deazaguanine + NH4(+) + ATP = 7-cyano-7-deazaguanine + ADP + phosphate + H2O + H(+). Its pathway is purine metabolism; 7-cyano-7-deazaguanine biosynthesis. Catalyzes the ATP-dependent conversion of 7-carboxy-7-deazaguanine (CDG) to 7-cyano-7-deazaguanine (preQ(0)). The protein is 7-cyano-7-deazaguanine synthase of Bacillus anthracis (strain A0248).